We begin with the raw amino-acid sequence, 600 residues long: Kelch-like protein 24 (600 aa).

In terms of domain architecture, BTB spans 66–133; that stretch reads TDVIICVEGK…VYTGKVKITT (68 aa). The BACK domain occupies 168-270; the sequence is CLGIQRFADT…HPNYFVQTVE (103 aa). 6 Kelch repeats span residues 314–363, 365–407, 408–454, 456–502, 504–544, and 546–592; these read VIVV…ALRN, ILVS…VLLG, KVYV…SCIG, LFVI…SLNN, IYVA…VCNG, and IYIL…TIHR.

As to quaternary structure, forms homodimers. Interacts with GRIK2. Component of the BCR(KLHL24) E3 ubiquitin ligase complex, composed of CUL3, RBX1 and KLHL24. Interacts with CUL3. Interacts with KRT14. Autoubiquitinated. Autoubiquitination leads to proteasomal degradation and is necessary to control KLHL24 levels. Expressed in the brain.

Its subcellular location is the perikaryon. The protein localises to the cell projection. It is found in the axon. It localises to the cytoplasm. The protein resides in the cell junction. Its subcellular location is the desmosome. The protein localises to the adherens junction. In terms of biological role, controls KRT14 levels during keratinocytes differentiation. As part of the BCR(KLHL24) E3 ubiquitin ligase complex, mediates ubiquitination of KRT14. Specifically reduces kainate receptor-mediated currents in hippocampal neurons, most probably by modulating channel properties. Has a crucial role in cardiac development and function. The protein is Kelch-like protein 24 (Klhl24) of Mus musculus (Mouse).